The chain runs to 436 residues: MGDILRDTADPQTPEELCRLYRSLTEQLRDQLQRIETDKQDLESQMLERISSLESRNLELREQIRQAEADKRYIETQKIRYEREVRKLKSESEQLRSPPLIIGTVVDVVDANRVIVRSSAGPRFLVRSSPSVNPDDIKPGARCTLNQQSLAIVELLPSSFDAQVYGMELVDSPQECYTDIGGLKEQINEVREAVELPLKRPELFTQIGIEPPKGVLLYGPPGTGKTLLAKAVAHETNAHFMRVVGSELVQKYIGEGARLVRELFDLAKKKAPTIIFIDEIDAVGASRTEANTSGDREVQRTLMQLLAGMDGFETRGDVKIIGATNRIDILDKALLRPGRFDRIIEIPLPDEEGRLSILKVHTRTLTMEETVNLPEIAGLTEGKNGADLRAICMEAGMYAIRNERPAITREDFLSAIEKVRLDFSHSPTDSEGRMFA.

A coiled-coil region spans residues 15-97 (EELCRLYRSL…LKSESEQLRS (83 aa)). ATP is bound by residues 222–227 (GTGKTL) and H361. Residues 434-436 (MFA) are docks into pockets in the proteasome alpha-ring to cause gate opening.

The protein belongs to the AAA ATPase family. In terms of assembly, homohexamer. The hexameric complex has a two-ring architecture resembling a top hat that caps the 20S proteasome core at one or both ends. Upon ATP-binding, the C-terminus of PAN interacts with the alpha-rings of the proteasome core by binding to the intersubunit pockets.

The protein localises to the cytoplasm. In terms of biological role, ATPase which is responsible for recognizing, binding, unfolding and translocation of substrate proteins into the archaeal 20S proteasome core particle. Is essential for opening the gate of the 20S proteasome via an interaction with its C-terminus, thereby allowing substrate entry and access to the site of proteolysis. Thus, the C-termini of the proteasomal ATPase function like a 'key in a lock' to induce gate opening and therefore regulate proteolysis. Unfolding activity requires energy from ATP hydrolysis, whereas ATP binding alone promotes ATPase-20S proteasome association which triggers gate opening, and supports translocation of unfolded substrates. In Methanoregula boonei (strain DSM 21154 / JCM 14090 / 6A8), this protein is Proteasome-activating nucleotidase.